A 1034-amino-acid chain; its full sequence is Tubulin glycylase 3D (1034 aa).

2 stretches are compositionally biased toward polar residues: residues 1–13 (MINS…QTLN) and 131–146 (QVNS…QNDF). Disordered stretches follow at residues 1–21 (MINS…SQMD), 131–166 (QVNS…STDY), and 189–208 (LNQQ…DNSQ). Residues 151–161 (RKPKNPTTKKR) show a composition bias toward basic residues. Positions 189–199 (LNQQNQQQQDL) are enriched in low complexity. A TTL domain is found at 571-930 (DINNVIDDEK…YGMAQKSGIK (360 aa)). ATP-binding positions include 741-744 (QKYI), Lys754, and Asp756. The tract at residues 1002 to 1034 (HDQKQFSSQQANNIETYSRPQTAKSQTQSSKKL) is disordered.

It localises to the cytoplasm. In terms of biological role, probable glycylase which modifies tubulin, generating side chains of glycine on the gamma-carboxyl groups of specific glutamate residues within the C-terminal tail of tubulin. The sequence is that of Tubulin glycylase 3D (TTLL3D) from Tetrahymena thermophila (strain SB210).